A 678-amino-acid polypeptide reads, in one-letter code: ATP-dependent RNA helicase DHX58 (678 aa).

Residues 11–188 form the Helicase ATP-binding domain; sequence ILPALEGKNI…QGAIDHILQL (178 aa). An ATP-binding site is contributed by 24-31; it reads LPTGAGKT. A DECH box motif is present at residues 131-134; that stretch reads DECH. The region spanning 353–514 is the Helicase C-terminal domain; it reads MLERILLKQF…KAVAAVQKMD (162 aa). Positions 489 to 546 form a coiled coil; the sequence is EMKRELTNEALEVLMEKAVAAVQKMDPDEFKAKIRDLQQASLVKRAARAAHREIQQGQ. The region spanning 542 to 669 is the RLR CTR domain; it reads IQQGQFLPEH…PVFDILQDCT (128 aa). Positions 556, 559, 612, and 615 each coordinate Zn(2+). The segment at 572–655 is RNA-binding; it reads VEGTHHVNVN…KIQAKKWSRV (84 aa).

Belongs to the helicase family. RLR subfamily. Monomer in the absence of dsRNA. Homodimer in the presence of dsRNA. Interacts with RIGI (via CARD domain), MAVS/IPS1 and DDX60. Found in a complex with RIGI and IFIH1/MDA5. Interacts with ANKRD17. Directly interacts with ATG5 and ATG12, either as ATG5 and ATG12 monomers or as ATG12-ATG5 conjugates. Highly expressed in mammary tissues. Expressed in liver and testis. Expressed at lower level in spleen, embryo, mammary gland and breast tumors.

The protein localises to the cytoplasm. It carries out the reaction ATP + H2O = ADP + phosphate + H(+). Functionally, acts as a regulator of RIGI and IFIH1/MDA5 mediated antiviral signaling. Cannot initiate antiviral signaling as it lacks the CARD domain required for activating MAVS/IPS1-dependent signaling events. Can have both negative and positive regulatory functions related to RIGI and IFIH1/MDA5 signaling and this role in regulating signaling may be complex and could probably depend on characteristics of the infecting virus or target cells, or both. Its inhibitory action on RIG-I signaling may involve the following mechanisms: competition with RIGI for binding to the viral RNA, binding to RIGI and inhibiting its dimerization and interaction with MAVS/IPS1, competing with IKBKE in its binding to MAVS/IPS1 thereby inhibiting activation of interferon regulatory factor 3 (IRF3). Its positive regulatory role may involve unwinding or stripping nucleoproteins of viral RNA thereby facilitating their recognition by RIGI and IFIH1/MDA5. Involved in the innate immune response to various RNA viruses and some DNA viruses such as poxviruses, and also to the bacterial pathogen Listeria monocytogenes. Can bind both ssRNA and dsRNA, with a higher affinity for dsRNA. Shows a preference to 5'-triphosphorylated RNA, although it can recognize RNA lacking a 5'-triphosphate. The polypeptide is ATP-dependent RNA helicase DHX58 (Mus musculus (Mouse)).